We begin with the raw amino-acid sequence, 95 residues long: Co-chaperonin GroES (95 aa).

The protein belongs to the GroES chaperonin family. As to quaternary structure, heptamer of 7 subunits arranged in a ring. Interacts with the chaperonin GroEL.

It is found in the cytoplasm. Functionally, together with the chaperonin GroEL, plays an essential role in assisting protein folding. The GroEL-GroES system forms a nano-cage that allows encapsulation of the non-native substrate proteins and provides a physical environment optimized to promote and accelerate protein folding. GroES binds to the apical surface of the GroEL ring, thereby capping the opening of the GroEL channel. This is Co-chaperonin GroES from Desulfatibacillum aliphaticivorans.